A 447-amino-acid chain; its full sequence is UPF0597 protein Amet_4665 (447 aa).

It belongs to the UPF0597 family.

This chain is UPF0597 protein Amet_4665, found in Alkaliphilus metalliredigens (strain QYMF).